Reading from the N-terminus, the 472-residue chain is WD repeat-containing protein 88 (472 aa).

Positions 1–22 (MASPPRCSPTAHDRECKLPPPS) are disordered. 7 WD repeats span residues 100–139 (GHEHAVSTCHFCVDDTKLLSGSYDCTVKLWDPVDGSVVRD), 143–182 (RPKAPVVECSITGDSSRVIAASYDKTVRAWDLETGKLLWK), 184–224 (RYDT…TVSV), 228–267 (HHTRSITSCCFDPDSQRVASVSLDRCIKIWDVTSQATLLT), 271–310 (AHSNAISNCCFTFSGHFLCTSSWDKNLKIWNVHTGEFRNC), 319–358 (GHEGSVSSCHFARDSSFLISGGFDRTVAIWDVAEGYRKLS), and 361–400 (GHNDWVMDVAISNNKKWILSASKDRTMRLWNIEEIDEIPL). The interval 447 to 472 (LPADTSSSSSSSERENSPPPRGSKDD) is disordered. The span at 458–472 (SERENSPPPRGSKDD) shows a compositional bias: basic and acidic residues.

In Homo sapiens (Human), this protein is WD repeat-containing protein 88 (WDR88).